The chain runs to 671 residues: DNA ligase (671 aa).

Residues 32-36 (DAEYD), 81-82 (SL), and E113 each bind NAD(+). The active-site N6-AMP-lysine intermediate is the K115. NAD(+) contacts are provided by R136, E173, K290, and K314. Residues C408, C411, C426, and C432 each contribute to the Zn(2+) site. The BRCT domain maps to 593-671 (EIDSPFAGKT…EAEMLRLLGS (79 aa)).

Belongs to the NAD-dependent DNA ligase family. LigA subfamily. Mg(2+) serves as cofactor. It depends on Mn(2+) as a cofactor.

It carries out the reaction NAD(+) + (deoxyribonucleotide)n-3'-hydroxyl + 5'-phospho-(deoxyribonucleotide)m = (deoxyribonucleotide)n+m + AMP + beta-nicotinamide D-nucleotide.. Functionally, DNA ligase that catalyzes the formation of phosphodiester linkages between 5'-phosphoryl and 3'-hydroxyl groups in double-stranded DNA using NAD as a coenzyme and as the energy source for the reaction. It is essential for DNA replication and repair of damaged DNA. The protein is DNA ligase of Escherichia coli O7:K1 (strain IAI39 / ExPEC).